Reading from the N-terminus, the 237-residue chain is ATP synthase subunit a (237 aa).

The next 5 membrane-spanning stretches (helical) occupy residues 17 to 37, 75 to 95, 112 to 132, 179 to 201, and 214 to 234; these read LSDM…AVAA, FLTL…LGLP, DATV…YYGV, ILLG…GAAI, and GTIQ…HKVS.

The protein belongs to the ATPase A chain family. F-type ATPases have 2 components, CF(1) - the catalytic core - and CF(0) - the membrane proton channel. CF(1) has five subunits: alpha(3), beta(3), gamma(1), delta(1), epsilon(1). CF(0) has three main subunits: a(1), b(2) and c(9-12). The alpha and beta chains form an alternating ring which encloses part of the gamma chain. CF(1) is attached to CF(0) by a central stalk formed by the gamma and epsilon chains, while a peripheral stalk is formed by the delta and b chains.

It is found in the cell membrane. In terms of biological role, key component of the proton channel; it plays a direct role in the translocation of protons across the membrane. The chain is ATP synthase subunit a from Geobacillus kaustophilus (strain HTA426).